The chain runs to 243 residues: 3,4-dihydroxyphthalate decarboxylase (243 aa).

E86 serves as the catalytic Proton donor/acceptor. E86, H105, H107, and H173 together coordinate a divalent metal cation.

It belongs to the aldolase class II family. A divalent metal cation is required as a cofactor.

It catalyses the reaction 3,4-dihydroxyphthalate + H(+) = 3,4-dihydroxybenzoate + CO2. Its pathway is xenobiotic degradation; phthalate degradation. Its function is as follows. Catalyzes the decarboxylation of 3,4-dihydroxyphthalate to protocatechuate (3,4-dihydroxybenzoate) during phthalate metabolism. This is 3,4-dihydroxyphthalate decarboxylase from Rhodococcus jostii (strain RHA1).